The following is a 95-amino-acid chain: Large ribosomal subunit protein bL25 (95 aa).

Belongs to the bacterial ribosomal protein bL25 family. As to quaternary structure, part of the 50S ribosomal subunit; part of the 5S rRNA/L5/L18/L25 subcomplex. Contacts the 5S rRNA. Binds to the 5S rRNA independently of L5 and L18.

Functionally, this is one of the proteins that binds to the 5S RNA in the ribosome where it forms part of the central protuberance. In Shewanella sediminis (strain HAW-EB3), this protein is Large ribosomal subunit protein bL25.